Consider the following 322-residue polypeptide: uncharacterized protein (322 aa).

It to M.jannaschii MJ0640 and MJ0799.

This is an uncharacterized protein from Synechocystis sp. (strain ATCC 27184 / PCC 6803 / Kazusa).